The primary structure comprises 308 residues: uncharacterized protein (308 aa).

This is an uncharacterized protein from Mycoplasmoides gallisepticum (strain R(low / passage 15 / clone 2)) (Mycoplasma gallisepticum).